The chain runs to 250 residues: Probable phosphatase VPA1527 (250 aa).

Zn(2+)-binding residues include His8, His10, His16, His41, Glu74, His102, His132, Asp194, and His196.

This sequence belongs to the PHP family. Zn(2+) is required as a cofactor.

The chain is Probable phosphatase VPA1527 from Vibrio parahaemolyticus serotype O3:K6 (strain RIMD 2210633).